We begin with the raw amino-acid sequence, 144 residues long: Ribonuclease H (144 aa).

The RNase H type-1 domain occupies 1–136 (MKIVTLFSDG…CDQMARNEAL (136 aa)). Mg(2+) is bound by residues aspartate 9, glutamate 47, aspartate 69, and aspartate 128.

The protein belongs to the RNase H family. Monomer. Mg(2+) serves as cofactor.

It localises to the cytoplasm. The catalysed reaction is Endonucleolytic cleavage to 5'-phosphomonoester.. Endonuclease that specifically degrades the RNA of RNA-DNA hybrids. The chain is Ribonuclease H from Campylobacter concisus (strain 13826).